The sequence spans 104 residues: Large ribosomal subunit protein uL24 (104 aa).

The protein belongs to the universal ribosomal protein uL24 family. As to quaternary structure, part of the 50S ribosomal subunit.

In terms of biological role, one of two assembly initiator proteins, it binds directly to the 5'-end of the 23S rRNA, where it nucleates assembly of the 50S subunit. Its function is as follows. One of the proteins that surrounds the polypeptide exit tunnel on the outside of the subunit. The sequence is that of Large ribosomal subunit protein uL24 from Escherichia coli O81 (strain ED1a).